A 103-amino-acid polypeptide reads, in one-letter code: Large ribosomal subunit protein uL24 (103 aa).

The protein belongs to the universal ribosomal protein uL24 family. Part of the 50S ribosomal subunit.

Its function is as follows. One of two assembly initiator proteins, it binds directly to the 5'-end of the 23S rRNA, where it nucleates assembly of the 50S subunit. Functionally, one of the proteins that surrounds the polypeptide exit tunnel on the outside of the subunit. In Syntrophomonas wolfei subsp. wolfei (strain DSM 2245B / Goettingen), this protein is Large ribosomal subunit protein uL24.